Reading from the N-terminus, the 493-residue chain is MTELNKLTLADSIKGLKNKDFTSTELVNAHIQQIEKHKNLNAYVTKTFDLALKGAQIADQNYAQNKARTLEGIPFAAKDLFCTKGIRTTACSNILKNFIPNYESSVTQNIFNNGGVMLGKTNMDEFAMGAANITSCFGNVINPWKANNDNSDLVPGGSSGGSAASVSGFMASAALGSDTGGSVRQPASFTGLVGFKPTYGRCSRYGMVSFASSLDQAGIFTRSVLDSAIMLEAMMGFDEKDSTSLKAEVPQLQSAIGSSVKNMKIGVPLSLGEGSIIEPDVMKMWQDTIELLKNAGTEIVDITLPYAKYGVAVYYVIAPAEASSNLSRYDGVRYGLRVERENMTLDEMYEMTRSAGFGEEVKRRIMIGTYVLSSSCMDAYYLKAQKVRSLVANDFNNAFTKVDTILLPAAPSEAFKIGEKQNDPTIMYLNDLFTIPASLAGLPCVSVPAGLSARGLPLGMQIIGKQLDEYNVLKVASTIESGVKHIKFEPKGF.

Active-site charge relay system residues include lysine 78 and serine 158. Serine 182 serves as the catalytic Acyl-ester intermediate.

Belongs to the amidase family. GatA subfamily. In terms of assembly, heterotrimer of A, B and C subunits.

The enzyme catalyses L-glutamyl-tRNA(Gln) + L-glutamine + ATP + H2O = L-glutaminyl-tRNA(Gln) + L-glutamate + ADP + phosphate + H(+). Functionally, allows the formation of correctly charged Gln-tRNA(Gln) through the transamidation of misacylated Glu-tRNA(Gln) in organisms which lack glutaminyl-tRNA synthetase. The reaction takes place in the presence of glutamine and ATP through an activated gamma-phospho-Glu-tRNA(Gln). In Rickettsia canadensis (strain McKiel), this protein is Glutamyl-tRNA(Gln) amidotransferase subunit A.